A 537-amino-acid polypeptide reads, in one-letter code: Glucocorticoid-induced transcript 1 protein (537 aa).

2 disordered regions span residues 1-45 (MSTA…APAA) and 62-254 (LLRG…HGNH). A phosphoserine mark is found at Ser69, Ser96, Ser98, and Ser99. Positions 69–86 (SPTRPAAAATAAAALGSL) are enriched in low complexity. A compositionally biased stretch (pro residues) spans 97–106 (PSSPTPPPAA). Thr101 is subject to Phosphothreonine. The segment covering 121–136 (RSPESRRRSSSPERRS) has biased composition (basic and acidic residues). Low complexity predominate over residues 152-168 (IRTSSTIRRTSSLDTIT). A phosphoserine mark is found at Ser162 and Ser163. A phosphothreonine mark is found at Thr166 and Thr168. Basic and acidic residues predominate over residues 178–192 (RDPHVHYPSCMRDKA). Ser214 is subject to Phosphoserine. A coiled-coil region spans residues 217–244 (SADQLKEIAKLRQQLQRSKQSSRHSKEK). Position 248 is a phosphoserine (Ser248). Thr256 bears the Phosphothreonine mark. Ser293 is modified (phosphoserine). The span at 309–321 (EVSKPLDIPDGRR) shows a compositional bias: basic and acidic residues. The segment at 309–407 (EVSKPLDIPD…KPNNSYMFKR (99 aa)) is disordered. Over residues 329–346 (RSSSTRSIDTQTPSVQER) the composition is skewed to polar residues. A Phosphothreonine modification is found at Thr333. Phosphoserine is present on Ser335. Phosphothreonine is present on Thr340. The segment covering 347–359 (SSSCSSHSPCVSP) has biased composition (low complexity). Ser384, Ser388, Ser396, Ser402, and Ser470 each carry phosphoserine. The interval 495-520 (SLSDDTSTADSLEPSAQQPSQQQQLL) is disordered.

In terms of tissue distribution, predominantly expressed in thymus and testis, especially in CD4+CD8+ cells and at specific stages of spermatogenesis.

The protein is Glucocorticoid-induced transcript 1 protein (Glcci1) of Mus musculus (Mouse).